A 126-amino-acid polypeptide reads, in one-letter code: Aspartate 1-decarboxylase (126 aa).

The active-site Schiff-base intermediate with substrate; via pyruvic acid is the Ser25. Ser25 is subject to Pyruvic acid (Ser). Thr57 is a binding site for substrate. The active-site Proton donor is Tyr58. 73-75 (GAA) contributes to the substrate binding site.

It belongs to the PanD family. In terms of assembly, heterooctamer of four alpha and four beta subunits. Pyruvate serves as cofactor. In terms of processing, is synthesized initially as an inactive proenzyme, which is activated by self-cleavage at a specific serine bond to produce a beta-subunit with a hydroxyl group at its C-terminus and an alpha-subunit with a pyruvoyl group at its N-terminus.

It localises to the cytoplasm. It catalyses the reaction L-aspartate + H(+) = beta-alanine + CO2. The protein operates within cofactor biosynthesis; (R)-pantothenate biosynthesis; beta-alanine from L-aspartate: step 1/1. Catalyzes the pyruvoyl-dependent decarboxylation of aspartate to produce beta-alanine. The sequence is that of Aspartate 1-decarboxylase from Yersinia pestis bv. Antiqua (strain Antiqua).